We begin with the raw amino-acid sequence, 867 residues long: Alanine--tRNA ligase (867 aa).

Zn(2+)-binding residues include H558, H562, C660, and H664.

The protein belongs to the class-II aminoacyl-tRNA synthetase family. Requires Zn(2+) as cofactor.

Its subcellular location is the cytoplasm. The enzyme catalyses tRNA(Ala) + L-alanine + ATP = L-alanyl-tRNA(Ala) + AMP + diphosphate. Catalyzes the attachment of alanine to tRNA(Ala) in a two-step reaction: alanine is first activated by ATP to form Ala-AMP and then transferred to the acceptor end of tRNA(Ala). Also edits incorrectly charged Ser-tRNA(Ala) and Gly-tRNA(Ala) via its editing domain. In Fervidobacterium nodosum (strain ATCC 35602 / DSM 5306 / Rt17-B1), this protein is Alanine--tRNA ligase.